The sequence spans 320 residues: Cytochrome f (320 aa).

The signal sequence occupies residues M1–A35. The heme site is built by Y36, C56, C59, and H60. A helical transmembrane segment spans residues V286–K306.

This sequence belongs to the cytochrome f family. As to quaternary structure, the 4 large subunits of the cytochrome b6-f complex are cytochrome b6, subunit IV (17 kDa polypeptide, petD), cytochrome f and the Rieske protein, while the 4 small subunits are PetG, PetL, PetM and PetN. The complex functions as a dimer. It depends on heme as a cofactor.

The protein localises to the plastid. Its subcellular location is the chloroplast thylakoid membrane. Its function is as follows. Component of the cytochrome b6-f complex, which mediates electron transfer between photosystem II (PSII) and photosystem I (PSI), cyclic electron flow around PSI, and state transitions. The chain is Cytochrome f from Platanus occidentalis (Sycamore).